A 168-amino-acid polypeptide reads, in one-letter code: Nicotinamide-nucleotide adenylyltransferase (168 aa).

The ATP site is built by arginine 8, phenylalanine 9, histidine 13, histidine 16, phenylalanine 119, arginine 121, tyrosine 124, glycine 126, threonine 127, and arginine 130.

This sequence belongs to the archaeal NMN adenylyltransferase family. Homohexamer existing as a trimer of dimers.

Its subcellular location is the cytoplasm. The enzyme catalyses beta-nicotinamide D-ribonucleotide + ATP + H(+) = diphosphate + NAD(+). Its pathway is cofactor biosynthesis; NAD(+) biosynthesis; NAD(+) from nicotinamide D-ribonucleotide: step 1/1. Its function is as follows. Catalyzes the formation of NAD(+) from nicotinamide mononucleotide (NMN) and ATP. The chain is Nicotinamide-nucleotide adenylyltransferase from Methanocaldococcus jannaschii (strain ATCC 43067 / DSM 2661 / JAL-1 / JCM 10045 / NBRC 100440) (Methanococcus jannaschii).